Reading from the N-terminus, the 611-residue chain is Leukotriene A-4 hydrolase (611 aa).

Lysine 73 carries the N6-acetyllysine modification. A peptide contacts are provided by residues 135-137 (QCQ) and 267-272 (PYGGME). Histidine 296 lines the Zn(2+) pocket. Glutamate 297 acts as the Proton acceptor in catalysis. The Zn(2+) site is built by histidine 300 and glutamate 319. Lysine 337 bears the N6-acetyllysine mark. Tyrosine 384 (proton donor) is an active-site residue. At lysine 414 the chain carries N6-acetyllysine. Serine 416 bears the Phosphoserine mark. 564 to 566 (RMK) lines the a peptide pocket. An N6-acetyllysine modification is found at lysine 573.

Belongs to the peptidase M1 family. In terms of assembly, monomer. The cofactor is Zn(2+). Phosphorylation at Ser-416 inhibits leukotriene-A4 hydrolase activity. In terms of tissue distribution, isoform 1 and isoform 2 are expressed in monocytes, lymphocytes, neutrophils, reticulocytes, platelets and fibroblasts.

The protein localises to the cytoplasm. The catalysed reaction is leukotriene A4 + H2O = leukotriene B4. It catalyses the reaction (5S,6S)-epoxy-(18R)-hydroxy-(7E,9E,11Z,14Z,16E)-eicosapentaenoate + H2O = resolvin E1. It carries out the reaction (5S,6S)-epoxy-(18S)-hydroxy-(7E,9E,11Z,14Z,16E)-eicosapentaenoate + H2O = 18S-resolvin E1. The enzyme catalyses Release of the N-terminal residue from a tripeptide.. It functions in the pathway lipid metabolism; leukotriene B4 biosynthesis. Inhibited by bestatin. The epoxide hydrolase activity is restrained by suicide inactivation that involves binding of LTA4 to Tyr-379. 4-(4-benzylphenyl)thiazol-2-amine (ARM1) selectively inhibits the epoxide hydrolase activity. Bifunctional zinc metalloenzyme that comprises both epoxide hydrolase (EH) and aminopeptidase activities. Acts as an epoxide hydrolase to catalyze the conversion of LTA4 to the pro-inflammatory mediator leukotriene B4 (LTB4). Also has aminopeptidase activity, with high affinity for N-terminal arginines of various synthetic tripeptides. In addition to its pro-inflammatory EH activity, may also counteract inflammation by its aminopeptidase activity, which inactivates by cleavage another neutrophil attractant, the tripeptide Pro-Gly-Pro (PGP), a bioactive fragment of collagen generated by the action of matrix metalloproteinase-9 (MMP9) and prolylendopeptidase (PREPL). Involved also in the biosynthesis of resolvin E1 and 18S-resolvin E1 from eicosapentaenoic acid, two lipid mediators that show potent anti-inflammatory and pro-resolving actions. The chain is Leukotriene A-4 hydrolase (LTA4H) from Homo sapiens (Human).